We begin with the raw amino-acid sequence, 200 residues long: GTP cyclohydrolase 1 (200 aa).

Zn(2+) is bound by residues Cys87, His90, and Cys158.

It belongs to the GTP cyclohydrolase I family. As to quaternary structure, toroid-shaped homodecamer, composed of two pentamers of five dimers.

It carries out the reaction GTP + H2O = 7,8-dihydroneopterin 3'-triphosphate + formate + H(+). The protein operates within cofactor biosynthesis; 7,8-dihydroneopterin triphosphate biosynthesis; 7,8-dihydroneopterin triphosphate from GTP: step 1/1. The protein is GTP cyclohydrolase 1 of Xanthomonas campestris pv. campestris (strain ATCC 33913 / DSM 3586 / NCPPB 528 / LMG 568 / P 25).